The sequence spans 128 residues: Protein ripply2 (128 aa).

The tract at residues 1-64 (MDTTESAESA…ALPSGPGMAE (64 aa)) is disordered. Positions 17–28 (PSRSRCPPSAQP) are enriched in low complexity. The short motif at 34–37 (WRPW) is the WRPW motif element. The tract at residues 74–109 (HPVRLFWPKSKCYDYLYQEAETLLKNFPIQATISFY) is ripply homology domain.

This sequence belongs to the ripply family. In terms of tissue distribution, expressed in the embryonic anterior presomitic mesoderm. First expressed in S-I at 8.5 dpc, where expression is maintained until 13.5 dpc, with an additional stripe of expression sometimes seen in the rostral part of S0 and S-I.

The protein resides in the nucleus. Its function is as follows. Plays a role in somitogenesis. Required for somite segregation and establishment of rostrocaudal polarity in somites. The chain is Protein ripply2 from Mus musculus (Mouse).